The chain runs to 125 residues: uncharacterized protein (125 aa).

It is found in the plastid. The protein resides in the chloroplast. This is an uncharacterized protein from Guillardia theta (Cryptophyte).